Reading from the N-terminus, the 517-residue chain is UDP-N-acetylmuramoylalanine--D-glutamate ligase (517 aa).

143-149 (GTNGKTT) is an ATP binding site.

This sequence belongs to the MurCDEF family.

Its subcellular location is the cytoplasm. It carries out the reaction UDP-N-acetyl-alpha-D-muramoyl-L-alanine + D-glutamate + ATP = UDP-N-acetyl-alpha-D-muramoyl-L-alanyl-D-glutamate + ADP + phosphate + H(+). The protein operates within cell wall biogenesis; peptidoglycan biosynthesis. Its function is as follows. Cell wall formation. Catalyzes the addition of glutamate to the nucleotide precursor UDP-N-acetylmuramoyl-L-alanine (UMA). This is UDP-N-acetylmuramoylalanine--D-glutamate ligase from Leifsonia xyli subsp. xyli (strain CTCB07).